The sequence spans 588 residues: Probable G-protein coupled receptor 162 (588 aa).

At 1–17 (MARGGLGAEEASLRSNA) the chain is on the extracellular side. A helical transmembrane segment spans residues 18–38 (LSWLACGLLALLANAWIILSI). Residues 39–49 (SAKQQKHKPLE) lie on the Cytoplasmic side of the membrane. A helical transmembrane segment spans residues 50-70 (LLLCFLAGTHILMAAVPLTTF). The Extracellular portion of the chain corresponds to 71-91 (AVVQLRRQASSDYDWNESICK). An N-linked (GlcNAc...) asparagine glycan is attached at N86. A helical transmembrane segment spans residues 92-112 (VFVSTYYTLALATCFTVASLS). Residues 113 to 133 (YHRMWMVRWPVNYRLSNAKKQ) lie on the Cytoplasmic side of the membrane. A helical membrane pass occupies residues 134 to 154 (ALHAVMGIWMVSFILSTLPSI). Residues 155 to 174 (GWHNNGERYYARGCQFIVSK) lie on the Extracellular side of the membrane. A helical transmembrane segment spans residues 175 to 195 (IGLGFGVCFSLLLLGGIVMGL). The Cytoplasmic segment spans residues 196–275 (VCVAITFYQT…SLQVTNLVSA (80 aa)). Residues 276-296 (IVFLYDSLTGVPILVVSFFSL) form a helical membrane-spanning segment. Residues 297–303 (KSDSAPP) lie on the Extracellular side of the membrane. A helical transmembrane segment spans residues 304–324 (WMVLAVLWCSMAQTLLLPSFI). At 325-588 (WSCERYRADV…GNPIFPQLTL (264 aa)) the chain is on the cytoplasmic side. 2 positions are modified to phosphoserine: S413 and S435. Disordered stretches follow at residues 511–545 (ETPL…SPDS) and 561–588 (SLTG…QLTL). Residues 514–525 (LPSPTASPGPSP) show a composition bias toward pro residues. Over residues 530-540 (PLGFSPRRLSL) the composition is skewed to low complexity.

It belongs to the G-protein coupled receptor 1 family.

Its subcellular location is the cell membrane. Functionally, orphan receptor. This Mus musculus (Mouse) protein is Probable G-protein coupled receptor 162 (Gpr162).